The primary structure comprises 167 residues: G/U mismatch-specific DNA glycosylase (167 aa).

Belongs to the uracil-DNA glycosylase (UDG) superfamily. TDG/mug family. In terms of assembly, binds DNA as a monomer.

It is found in the cytoplasm. The catalysed reaction is Specifically hydrolyzes mismatched double-stranded DNA and polynucleotides, releasing free uracil.. Functionally, excises ethenocytosine and uracil, which can arise by alkylation or deamination of cytosine, respectively, from the corresponding mispairs with guanine in ds-DNA. It is capable of hydrolyzing the carbon-nitrogen bond between the sugar-phosphate backbone of the DNA and the mispaired base. The complementary strand guanine functions in substrate recognition. Required for DNA damage lesion repair in stationary-phase cells. The polypeptide is G/U mismatch-specific DNA glycosylase (Pectobacterium carotovorum subsp. carotovorum (strain PC1)).